The primary structure comprises 694 residues: Putative L-type lectin-domain containing receptor kinase II.2 (694 aa).

Positions 1–24 (MAGVLRSLRFWMIICVQVLSLVLA) are cleaved as a signal peptide. The Extracellular segment spans residues 25 to 318 (QDRDEFVYHD…PTSRSKDSKN (294 aa)). Residues 27–272 (RDEFVYHDFS…DQYILGWSFK (246 aa)) form a legume-lectin like region. N-linked (GlcNAc...) asparagine glycosylation is found at asparagine 57, asparagine 58, asparagine 73, asparagine 131, asparagine 172, asparagine 183, asparagine 201, asparagine 208, asparagine 240, and asparagine 246. The tract at residues 283–314 (SKILDPPNRPPPPSSPPPPPPPPPTPPTSRSK) is disordered. A compositionally biased stretch (pro residues) spans 289 to 309 (PNRPPPPSSPPPPPPPPPTPP). The helical transmembrane segment at 319–339 (IIIICVTVTSIAFLLMLGGFL) threads the bilayer. Residues 340–694 (YLYKKKKYAE…EDVTILFGGR (355 aa)) are Cytoplasmic-facing. Residues 375 to 650 (FRENRLLGAG…IQYLEGNATI (276 aa)) enclose the Protein kinase domain. ATP contacts are provided by residues 381–389 (LGAGGFGKV) and lysine 403. Aspartate 500 serves as the catalytic Proton acceptor.

It in the C-terminal section; belongs to the protein kinase superfamily. Ser/Thr protein kinase family. The protein in the N-terminal section; belongs to the leguminous lectin family.

It is found in the cell membrane. It carries out the reaction L-seryl-[protein] + ATP = O-phospho-L-seryl-[protein] + ADP + H(+). The enzyme catalyses L-threonyl-[protein] + ATP = O-phospho-L-threonyl-[protein] + ADP + H(+). The polypeptide is Putative L-type lectin-domain containing receptor kinase II.2 (LECRK22) (Arabidopsis thaliana (Mouse-ear cress)).